Here is a 317-residue protein sequence, read N- to C-terminus: Probable cell division protein WhiA (317 aa).

Residues 278–311 (SLQGLGELLDPQVGKSGVNHRLRKIGEKADELRQ) constitute a DNA-binding region (H-T-H motif).

It belongs to the WhiA family.

Involved in cell division and chromosome segregation. The chain is Probable cell division protein WhiA from Lachnospira eligens (strain ATCC 27750 / DSM 3376 / VPI C15-48 / C15-B4) (Eubacterium eligens).